A 608-amino-acid polypeptide reads, in one-letter code: Albumin (608 aa).

The first 18 residues, 1-18 (MKWVTFLLLLFVSDSAFS), serve as a signal peptide directing secretion. The propeptide occupies 19–24 (RGLFRR). Albumin domains are found at residues 19 to 211 (RGLF…ALKE), 212 to 403 (KALA…EFQP), and 404 to 601 (LVEE…KLVA). His-27 is a Cu cation binding site. At Ser-29 the chain carries Phosphoserine. Ca(2+)-binding residues include Glu-30 and Asp-37. Cys-77 and Cys-86 are joined by a disulfide. Phosphoserine occurs at positions 82 and 89. His-91 contacts Zn(2+). 6 cysteine pairs are disulfide-bonded: Cys-99-Cys-115, Cys-114-Cys-125, Cys-148-Cys-193, Cys-192-Cys-201, Cys-224-Cys-270, and Cys-269-Cys-277. Glu-268 contacts Ca(2+). The Zn(2+) site is built by His-271 and Asp-273. The Ca(2+) site is built by Asp-273, Glu-276, and Asp-279. 8 disulfides stabilise this stretch: Cys-289–Cys-303, Cys-302–Cys-313, Cys-340–Cys-385, Cys-384–Cys-393, Cys-416–Cys-462, Cys-461–Cys-472, Cys-485–Cys-501, and Cys-500–Cys-511. Ser-297 is modified (phosphoserine). At Ser-443 the chain carries Phosphoserine. Phosphothreonine is present on residues Thr-444 and Thr-446. Lys-460 is modified (N6-succinyllysine). Residue Ser-513 is modified to Phosphoserine. 2 disulfide bridges follow: Cys-538/Cys-583 and Cys-582/Cys-591. Lys-543 is modified (N6-succinyllysine). Lys-558 carries the N6-methyllysine modification. Thr-570 bears the Phosphothreonine mark. An N6-succinyllysine modification is found at Lys-588.

It belongs to the ALB/AFP/VDB family. As to quaternary structure, interacts with FCGRT; this interaction regulates ALB homeostasis. Interacts with TASOR. In plasma, occurs in a covalently-linked complex with chromophore-bound alpha-1-microglobulin; this interaction does not prevent fatty acid binding to ALB. In terms of tissue distribution, plasma.

It localises to the secreted. Binds water, Ca(2+), Na(+), K(+), fatty acids, hormones, bilirubin and drugs. Its main function is the regulation of the colloidal osmotic pressure of blood. Major zinc transporter in plasma, typically binds about 80% of all plasma zinc. Major calcium and magnesium transporter in plasma, binds approximately 45% of circulating calcium and magnesium in plasma. Potentially has more than two calcium-binding sites and might additionally bind calcium in a non-specific manner. The shared binding site between zinc and calcium at residue Asp-273 suggests a crosstalk between zinc and calcium transport in the blood. The rank order of affinity is zinc &gt; calcium &gt; magnesium. Binds to the bacterial siderophore enterobactin and inhibits enterobactin-mediated iron uptake of E.coli from ferric transferrin, and may thereby limit the utilization of iron and growth of enteric bacteria such as E.coli. Does not prevent iron uptake by the bacterial siderophore aerobactin. The sequence is that of Albumin from Mesocricetus auratus (Golden hamster).